The sequence spans 539 residues: Eukaryotic translation initiation factor 3 subunit L (539 aa).

The region spanning Thr306 to His514 is the PCI domain.

This sequence belongs to the eIF-3 subunit L family. As to quaternary structure, component of the eukaryotic translation initiation factor 3 (eIF-3) complex. The eIF-3 complex interacts with pix.

The protein resides in the cytoplasm. Functionally, component of the eukaryotic translation initiation factor 3 (eIF-3) complex, which is involved in protein synthesis of a specialized repertoire of mRNAs and, together with other initiation factors, stimulates binding of mRNA and methionyl-tRNAi to the 40S ribosome. The eIF-3 complex specifically targets and initiates translation of a subset of mRNAs involved in cell proliferation. The chain is Eukaryotic translation initiation factor 3 subunit L from Drosophila sechellia (Fruit fly).